A 424-amino-acid chain; its full sequence is Steryl acetyl hydrolase 1 (424 aa).

Ala2 is modified (N-acetylalanine). At 2–45 (AANSGLDSKVEYYRLQENEIISAVSSEDADQNDAGFRLSTIHLH) the chain is on the cytoplasmic side. Residues 46–66 (LFHGLKFAALLFTVVPVFIIL) form a helical; Signal-anchor for type II membrane protein membrane-spanning segment. Topologically, residues 67–424 (DSMKIIFQRK…IARILEFMQS (358 aa)) are lumenal. Asn85 carries an N-linked (GlcNAc...) asparagine glycan. Positions 176–178 (HGG) match the Involved in the stabilization of the negatively charged intermediate by the formation of the oxyanion hole motif. The active site involves Ser250. A glycan (N-linked (GlcNAc...) asparagine) is linked at Asn283. His395 is a catalytic residue. N-linked (GlcNAc...) asparagine glycosylation is present at Asn401.

It belongs to the 'GDXG' lipolytic enzyme family.

The protein localises to the endoplasmic reticulum membrane. Its function is as follows. Required for the deacetylation of acetylated sterols. Involved in the resistance to eugenol and pregnenolone toxicity. This chain is Steryl acetyl hydrolase 1 (SAY1), found in Saccharomyces cerevisiae (strain ATCC 204508 / S288c) (Baker's yeast).